Reading from the N-terminus, the 87-residue chain is Lantipeptide prochlorosin 3.3 (87 aa).

Positions 1–64 are excised as a propeptide; it reads MSEEQLKAFI…DEELEAASGG (64 aa). 2,3-didehydrobutyrine is present on Thr67. The beta-methyllanthionine (Thr-Cys) cross-link spans 75–85; it reads TAGCYGGTKMC. A cross-link (beta-methyllanthionine (Cys-Thr)) is located at residues 78 to 82; that stretch reads CYGGT.

Cross-links are proved in vitro, when coepressed in E.coli with the ProcM lanthionine synthetase. Post-translationally, the beta-methyllanthionine residues have a DL configuration (with 2S,3S,6R stereochemistry). In terms of processing, maturation of prochlorosin involves the enzymatic conversion of Thr, and Ser into dehydrated AA and the formation of thioether bonds with cysteines. This is followed by membrane translocation and cleavage of the modified precursor.

The protein resides in the secreted. Lanthionine-containing peptide (lantipeptide) with unknown function. Does not show antibiotic activity against Lactococcus lactis 117 and Bacillus subtilis 6633 bacteria. Organisms that produce this peptide live in oligotrophic environments at very dilute concentrations, suggesting this peptide is not secreted to influence other bacteria. The polypeptide is Lantipeptide prochlorosin 3.3 (Prochlorococcus marinus (strain MIT 9313)).